The primary structure comprises 661 residues: Sperm transmembrane protein 9 (661 aa).

The N-terminal stretch at 1–16 (MNVILVLVVLFFAGDC) is a signal peptide. Residues 17–618 (AKIRKIIDFL…MTNRLMKNYE (602 aa)) lie on the Extracellular side of the membrane. Residues 52-90 (NFNPCLENPKICSNRGKCLHENGNFYCICPVTHYGKTCE) enclose the EGF-like 1 domain. 3 cysteine pairs are disulfide-bonded: cysteine 56/cysteine 69, cysteine 63/cysteine 78, and cysteine 80/cysteine 89. N-linked (GlcNAc...) asparagine glycosylation is found at asparagine 105, asparagine 106, asparagine 134, and asparagine 190. The EGF-like 2 domain maps to 210 to 259 (QISACFDTQCDNGGICEDVVDWKTKTVTATCKCPSAIELIGGTVTGENCE). 3 cysteine pairs are disulfide-bonded: cysteine 214–cysteine 225, cysteine 219–cysteine 240, and cysteine 242–cysteine 258. N-linked (GlcNAc...) asparagine glycosylation is found at asparagine 279, asparagine 290, asparagine 316, and asparagine 338. The Cell attachment site signature appears at 377–379 (RGD). EGF-like domains are found at residues 377 to 414 (RGDR…EKCE), 519 to 557 (HTNP…SLCE), and 559 to 600 (VDDS…LDCN). Intrachain disulfides connect cysteine 385–cysteine 402, cysteine 393–cysteine 404, cysteine 413–cysteine 419, cysteine 523–cysteine 534, cysteine 528–cysteine 545, cysteine 547–cysteine 556, cysteine 563–cysteine 576, cysteine 571–cysteine 588, and cysteine 590–cysteine 599. An N-linked (GlcNAc...) asparagine glycan is attached at asparagine 549. A helical membrane pass occupies residues 619–639 (FSLPLVACFVSLAILLPVIVI). Residues 640–661 (SRRRQGRVEEAKKTSEVKTENP) are Cytoplasmic-facing.

Expressed in spermatids, during spermogenesis expression is primarily localized to the pseudopod.

It is found in the cytoplasm. It localises to the membrane. In terms of biological role, required for fertilization. May be required for cell adhesion and/or function as a signaling molecule. This Caenorhabditis elegans protein is Sperm transmembrane protein 9 (spe-9).